A 357-amino-acid polypeptide reads, in one-letter code: Peptide chain release factor 1 (357 aa).

Gln232 is modified (N5-methylglutamine). Basic and acidic residues predominate over residues Asp281 to Arg305. Positions Asp281–Phe309 are disordered.

Belongs to the prokaryotic/mitochondrial release factor family. Post-translationally, methylated by PrmC. Methylation increases the termination efficiency of RF1.

The protein localises to the cytoplasm. In terms of biological role, peptide chain release factor 1 directs the termination of translation in response to the peptide chain termination codons UAG and UAA. The sequence is that of Peptide chain release factor 1 from Nitratidesulfovibrio vulgaris (strain DSM 19637 / Miyazaki F) (Desulfovibrio vulgaris).